Here is a 76-residue protein sequence, read N- to C-terminus: Cytochrome c oxidase subunit 6C-2 (76 aa).

Residues 4 to 14 (GALLPKPQMRG) lie on the Mitochondrial matrix side of the membrane. The chain crosses the membrane as a helical span at residues 15-55 (LLAKRLRVHIVGAFVVALGVAAAYKFGVAEPRKKAYADFYR). Over 56 to 76 (NYDSMKDFEEMRQAGVFQSAK) the chain is Mitochondrial intermembrane. S74 carries the phosphoserine modification.

The protein belongs to the cytochrome c oxidase subunit 6c family. As to quaternary structure, component of the cytochrome c oxidase (complex IV, CIV), a multisubunit enzyme composed of 14 subunits. The complex is composed of a catalytic core of 3 subunits MT-CO1, MT-CO2 and MT-CO3, encoded in the mitochondrial DNA, and 11 supernumerary subunits COX4I, COX5A, COX5B, COX6A, COX6B, COX6C, COX7A, COX7B, COX7C, COX8 and NDUFA4, which are encoded in the nuclear genome. The complex exists as a monomer or a dimer and forms supercomplexes (SCs) in the inner mitochondrial membrane with NADH-ubiquinone oxidoreductase (complex I, CI) and ubiquinol-cytochrome c oxidoreductase (cytochrome b-c1 complex, complex III, CIII), resulting in different assemblies (supercomplex SCI(1)III(2)IV(1) and megacomplex MCI(2)III(2)IV(2)).

It localises to the mitochondrion inner membrane. The protein operates within energy metabolism; oxidative phosphorylation. Component of the cytochrome c oxidase, the last enzyme in the mitochondrial electron transport chain which drives oxidative phosphorylation. The respiratory chain contains 3 multisubunit complexes succinate dehydrogenase (complex II, CII), ubiquinol-cytochrome c oxidoreductase (cytochrome b-c1 complex, complex III, CIII) and cytochrome c oxidase (complex IV, CIV), that cooperate to transfer electrons derived from NADH and succinate to molecular oxygen, creating an electrochemical gradient over the inner membrane that drives transmembrane transport and the ATP synthase. Cytochrome c oxidase is the component of the respiratory chain that catalyzes the reduction of oxygen to water. Electrons originating from reduced cytochrome c in the intermembrane space (IMS) are transferred via the dinuclear copper A center (CU(A)) of subunit 2 and heme A of subunit 1 to the active site in subunit 1, a binuclear center (BNC) formed by heme A3 and copper B (CU(B)). The BNC reduces molecular oxygen to 2 water molecules using 4 electrons from cytochrome c in the IMS and 4 protons from the mitochondrial matrix. The polypeptide is Cytochrome c oxidase subunit 6C-2 (Cox6c2) (Rattus norvegicus (Rat)).